Consider the following 102-residue polypeptide: Small ribosomal subunit protein uS10 (102 aa).

Belongs to the universal ribosomal protein uS10 family. In terms of assembly, part of the 30S ribosomal subunit.

In terms of biological role, involved in the binding of tRNA to the ribosomes. This Cupriavidus metallidurans (strain ATCC 43123 / DSM 2839 / NBRC 102507 / CH34) (Ralstonia metallidurans) protein is Small ribosomal subunit protein uS10.